The primary structure comprises 259 residues: Thiazole synthase (259 aa).

Lysine 100 acts as the Schiff-base intermediate with DXP in catalysis. Residues glycine 161, 187 to 188 (AG), and 209 to 210 (NT) each bind 1-deoxy-D-xylulose 5-phosphate.

Belongs to the ThiG family. In terms of assembly, homotetramer. Forms heterodimers with either ThiH or ThiS.

It localises to the cytoplasm. The catalysed reaction is [ThiS sulfur-carrier protein]-C-terminal-Gly-aminoethanethioate + 2-iminoacetate + 1-deoxy-D-xylulose 5-phosphate = [ThiS sulfur-carrier protein]-C-terminal Gly-Gly + 2-[(2R,5Z)-2-carboxy-4-methylthiazol-5(2H)-ylidene]ethyl phosphate + 2 H2O + H(+). It functions in the pathway cofactor biosynthesis; thiamine diphosphate biosynthesis. Catalyzes the rearrangement of 1-deoxy-D-xylulose 5-phosphate (DXP) to produce the thiazole phosphate moiety of thiamine. Sulfur is provided by the thiocarboxylate moiety of the carrier protein ThiS. In vitro, sulfur can be provided by H(2)S. The protein is Thiazole synthase of Methylobacillus flagellatus (strain ATCC 51484 / DSM 6875 / VKM B-1610 / KT).